The following is a 499-amino-acid chain: Lysine--tRNA ligase (499 aa).

Glu-409 and Glu-416 together coordinate Mg(2+).

The protein belongs to the class-II aminoacyl-tRNA synthetase family. In terms of assembly, homodimer. Requires Mg(2+) as cofactor.

It localises to the cytoplasm. The enzyme catalyses tRNA(Lys) + L-lysine + ATP = L-lysyl-tRNA(Lys) + AMP + diphosphate. The chain is Lysine--tRNA ligase from Pseudomonas fluorescens (strain Pf0-1).